A 477-amino-acid chain; its full sequence is Aryl-phospho-beta-D-glucosidase BglC (477 aa).

The Proton donor role is filled by glutamate 170. Glutamate 378 functions as the Nucleophile in the catalytic mechanism.

The protein belongs to the glycosyl hydrolase 1 family.

It catalyses the reaction 6-phospho-beta-D-glucosyl-(1-&gt;4)-D-glucose + H2O = D-glucose 6-phosphate + D-glucose. In terms of biological role, is able to catalyze the hydrolysis of aryl-phospho-beta-D-glucosides such as 4-methylumbelliferyl-phospho-beta-D-glucopyranoside (MUG-P), phosphoarbutin and phosphosalicin. Is not essential for growth on arbutin and salicin as the sole carbon source. This is Aryl-phospho-beta-D-glucosidase BglC (bglC) from Bacillus subtilis (strain 168).